The primary structure comprises 189 residues: Cytidylate kinase (189 aa).

Residue 7–15 coordinates ATP; it reads GPPGSGKTS.

It belongs to the cytidylate kinase family. Type 2 subfamily.

It localises to the cytoplasm. The enzyme catalyses CMP + ATP = CDP + ADP. The catalysed reaction is dCMP + ATP = dCDP + ADP. The sequence is that of Cytidylate kinase from Saccharolobus islandicus (strain L.S.2.15 / Lassen #1) (Sulfolobus islandicus).